We begin with the raw amino-acid sequence, 398 residues long: Bone morphogenetic protein 2-B (398 aa).

Positions 1–23 (MVAGIHSLLLLQFYQILLSGCTG) are cleaved as a signal peptide. A propeptide spanning residues 24-284 (LVPEEGKRKY…GHALHKRQKR (261 aa)) is cleaved from the precursor. N-linked (GlcNAc...) asparagine glycosylation is found at Asn-137, Asn-202, Asn-237, and Asn-340. 3 disulfides stabilise this stretch: Cys-298/Cys-363, Cys-327/Cys-395, and Cys-331/Cys-397.

It belongs to the TGF-beta family. Homodimer; disulfide-linked.

Its subcellular location is the secreted. Its function is as follows. Induces cartilage and bone formation. The chain is Bone morphogenetic protein 2-B (bmp2-b) from Xenopus laevis (African clawed frog).